Here is a 730-residue protein sequence, read N- to C-terminus: Aspyridones cluster regulator apdR (730 aa).

The segment at residues 20-46 (CTECRRRKIRCDQATPCRHCEKAALRC) is a DNA-binding region (zn(2)-C6 fungal-type).

It localises to the nucleus. Functionally, transcription factor involved in regulation of gene cluster that mediates the biosynthesis of aspyridones. This Emericella nidulans (strain FGSC A4 / ATCC 38163 / CBS 112.46 / NRRL 194 / M139) (Aspergillus nidulans) protein is Aspyridones cluster regulator apdR.